Consider the following 450-residue polypeptide: V-type proton ATPase subunit H (450 aa).

The protein belongs to the V-ATPase H subunit family. As to quaternary structure, V-ATPase is a heteromultimeric enzyme composed of a peripheral catalytic V1 complex (components A to H) attached to an integral membrane V0 proton pore complex (components: a, c, c', c'', d, e, f and VOA1).

The protein resides in the vacuole membrane. Subunit of the V1 complex of vacuolar(H+)-ATPase (V-ATPase), a multisubunit enzyme composed of a peripheral complex (V1) that hydrolyzes ATP and a membrane integral complex (V0) that translocates protons. V-ATPase is responsible for acidifying and maintaining the pH of intracellular compartments. This subunit is essential for activity, but not assembly, of the enzyme complex. This subunit is also required for silencing the ATPase activity of V-ATPase when V1 is detached from V0. This is V-type proton ATPase subunit H (vma13) from Schizosaccharomyces pombe (strain 972 / ATCC 24843) (Fission yeast).